Reading from the N-terminus, the 551-residue chain is HTH-type transcriptional regulator SgrR (551 aa).

The 116-residue stretch at methionine 1–arginine 116 folds into the HTH marR-type domain. Residues leucine 26–aspartate 49 constitute a DNA-binding region (H-T-H motif). Positions glutamate 163–tryptophan 492 are solute-binding.

Activates the small RNA gene sgrS under glucose-phosphate stress conditions as well as yfdZ. Represses its own transcription under both stress and non-stress conditions. Might act as a sensor of the intracellular accumulation of phosphoglucose by binding these molecules in its C-terminal solute-binding domain. This Shigella boydii serotype 4 (strain Sb227) protein is HTH-type transcriptional regulator SgrR.